Here is a 338-residue protein sequence, read N- to C-terminus: Putative clathrin assembly protein At5g10410 (338 aa).

The ENTH domain maps to 27 to 157 (FGSTAVKYIH…WVPKVLGSFP (131 aa)).

The protein localises to the membrane. Its subcellular location is the clathrin-coated pit. It localises to the golgi apparatus. The protein resides in the cytoplasmic vesicle. It is found in the clathrin-coated vesicle. This Arabidopsis thaliana (Mouse-ear cress) protein is Putative clathrin assembly protein At5g10410.